The following is a 530-amino-acid chain: N-acetylmuramoyl-L-alanine amidase (530 aa).

Positions 1–22 (MKAWGALWIVLGLLLWPEPGAA) are cleaved as a signal peptide. N-linked (GlcNAc...) asparagine glycosylation is found at Asn61, Asn80, and Asn174. Ser219 is modified (phosphoserine). An N-linked (GlcNAc...) asparagine glycan is attached at Asn335. Residues 386–512 (FLYVHHTYVP…RQLVLTHCPG (127 aa)) enclose the N-acetylmuramoyl-L-alanine amidase domain. His390 is a Zn(2+) binding site. A disulfide bond links Cys399 and Cys405. The N-linked (GlcNAc...) asparagine glycan is linked to Asn465. 2 residues coordinate Zn(2+): His502 and Cys510.

Belongs to the N-acetylmuramoyl-L-alanine amidase 2 family. It depends on Zn(2+) as a cofactor. Strongly expressed in liver and fetal liver.

Its subcellular location is the secreted. It localises to the membrane. It carries out the reaction Hydrolyzes the link between N-acetylmuramoyl residues and L-amino acid residues in certain cell-wall glycopeptides.. Its function is as follows. May play a scavenger role by digesting biologically active peptidoglycan (PGN) into biologically inactive fragments. Has no direct bacteriolytic activity. This is N-acetylmuramoyl-L-alanine amidase (Pglyrp2) from Mus musculus (Mouse).